A 290-amino-acid polypeptide reads, in one-letter code: GTPase Era (290 aa).

The region spanning 2-169 (KSGFVSIIGR…KDKIYENLQE (168 aa)) is the Era-type G domain. The segment at 10 to 17 (GRPSTGKS) is G1. 10–17 (GRPSTGKS) provides a ligand contact to GTP. The segment at 36–40 (QTTRN) is G2. Residues 57 to 60 (DTPG) form a G3 region. GTP contacts are provided by residues 57 to 61 (DTPGF) and 119 to 122 (NKID). Positions 119-122 (NKID) are G4. The segment at 148 to 150 (ISA) is G5. Residues 200-276 (LKEELPYSLY…DLFLQVKLRK (77 aa)) form the KH type-2 domain.

Belongs to the TRAFAC class TrmE-Era-EngA-EngB-Septin-like GTPase superfamily. Era GTPase family. In terms of assembly, monomer.

It localises to the cytoplasm. Its subcellular location is the cell inner membrane. Functionally, an essential GTPase that binds both GDP and GTP, with rapid nucleotide exchange. Plays a role in 16S rRNA processing and 30S ribosomal subunit biogenesis and possibly also in cell cycle regulation and energy metabolism. The protein is GTPase Era of Borrelia turicatae (strain 91E135).